Here is a 1295-residue protein sequence, read N- to C-terminus: Serine protease pet autotransporter (1295 aa).

The N-terminal stretch at 1–52 (MNKIYSIKYSAATGGLIAVSELAKKVICKTNRKISAALLSLAVISYTNIIYA) is a signal peptide. A Peptidase S6 domain is found at 54 to 304 (NMDISKAWAR…TPFDSKTTNE (251 aa)). Active-site charge relay system residues include histidine 124, aspartate 153, and serine 260. Residues 1029–1295 (DINGEAGAWA…AINANFRYSF (267 aa)) enclose the Autotransporter domain.

Cleaved to release the mature protein from the outer membrane.

It localises to the periplasm. The protein localises to the secreted. Its subcellular location is the cell surface. It is found in the cell outer membrane. With respect to regulation, inhibition of cytotoxic activity by phenylmethylsulfonyl fluoride. Functionally, serine protease with enterotoxic and cytotoxic activity. Internalization into the host cell is required for the induction of cytopathic effects. However, the serine activity is not necessary for secretion and internalization into the host cell. This Escherichia coli O44:H18 (strain 042 / EAEC) protein is Serine protease pet autotransporter (pet).